A 156-amino-acid chain; its full sequence is Ribosomal RNA large subunit methyltransferase H (156 aa).

Residues leucine 73, glycine 104, and 123–128 contribute to the S-adenosyl-L-methionine site; that span reads LSALTL.

The protein belongs to the RNA methyltransferase RlmH family. As to quaternary structure, homodimer.

Its subcellular location is the cytoplasm. The catalysed reaction is pseudouridine(1915) in 23S rRNA + S-adenosyl-L-methionine = N(3)-methylpseudouridine(1915) in 23S rRNA + S-adenosyl-L-homocysteine + H(+). In terms of biological role, specifically methylates the pseudouridine at position 1915 (m3Psi1915) in 23S rRNA. This chain is Ribosomal RNA large subunit methyltransferase H, found in Vibrio parahaemolyticus serotype O3:K6 (strain RIMD 2210633).